The primary structure comprises 523 residues: Probable 3-ketoacyl-CoA synthase 20 (523 aa).

2 helical membrane-spanning segments follow: residues 31–55 and 78–96; these read IVAV…AAGG and ALAV…YAAS. Residues 93-382 form the FAE domain; the sequence is YAASRPRPVY…RFLATVVLKR (290 aa). Residues C237, H317, H401, H405, and N438 contribute to the active site.

Belongs to the thiolase-like superfamily. Chalcone/stilbene synthases family. As to expression, highly expressed in leaf sheaths. Expressed in leaves, flag leaves and panicles.

It localises to the membrane. The catalysed reaction is a very-long-chain acyl-CoA + malonyl-CoA + H(+) = a very-long-chain 3-oxoacyl-CoA + CO2 + CoA. Functionally, contributes to fatty acids elongation. Plays a role in controlling leaf anatomy and plant architecture. The protein is Probable 3-ketoacyl-CoA synthase 20 of Oryza sativa subsp. japonica (Rice).